Consider the following 183-residue polypeptide: Translation initiation factor IF-3 (183 aa).

The protein belongs to the IF-3 family. As to quaternary structure, monomer.

The protein localises to the cytoplasm. Functionally, IF-3 binds to the 30S ribosomal subunit and shifts the equilibrium between 70S ribosomes and their 50S and 30S subunits in favor of the free subunits, thus enhancing the availability of 30S subunits on which protein synthesis initiation begins. The chain is Translation initiation factor IF-3 from Pseudomonas fluorescens (strain SBW25).